The chain runs to 276 residues: Diaminopimelate epimerase (276 aa).

3 residues coordinate substrate: Asn-13, Gln-46, and Asn-66. Catalysis depends on Cys-75, which acts as the Proton donor. Residues 76-77 (GN), Asn-159, Asn-192, and 210-211 (ER) each bind substrate. The active-site Proton acceptor is Cys-219. 220-221 (GT) is a binding site for substrate.

This sequence belongs to the diaminopimelate epimerase family. As to quaternary structure, homodimer.

The protein localises to the cytoplasm. The enzyme catalyses (2S,6S)-2,6-diaminopimelate = meso-2,6-diaminopimelate. It participates in amino-acid biosynthesis; L-lysine biosynthesis via DAP pathway; DL-2,6-diaminopimelate from LL-2,6-diaminopimelate: step 1/1. Catalyzes the stereoinversion of LL-2,6-diaminopimelate (L,L-DAP) to meso-diaminopimelate (meso-DAP), a precursor of L-lysine and an essential component of the bacterial peptidoglycan. The chain is Diaminopimelate epimerase from Cellvibrio japonicus (strain Ueda107) (Pseudomonas fluorescens subsp. cellulosa).